The chain runs to 329 residues: Adenylate isopentenyltransferase 7, mitochondrial (329 aa).

Residues 1-40 constitute a mitochondrion transit peptide; sequence MKFSISSLKQVQPILCFKNKLSKVNVNSFLHPKEKVIFVM. 41 to 48 serves as a coordination point for ATP; the sequence is GATGSGKS.

The protein belongs to the IPP transferase family. In terms of tissue distribution, expressed in both the vascular stele and the phloem companion cells of the root, in endodermis of the root elongation zone, trichomes on young leaves, and some pollen tubes.

The protein resides in the mitochondrion. The catalysed reaction is dimethylallyl diphosphate + ADP = N(6)-(dimethylallyl)adenosine 5'-diphosphate + diphosphate. It catalyses the reaction dimethylallyl diphosphate + ATP = N(6)-(dimethylallyl)adenosine 5'-triphosphate + diphosphate. Functionally, involved in cytokinin biosynthesis. Catalyzes the transfer of an isopentenyl group from dimethylallyl diphosphate (DMAPP) to ATP and ADP. The protein is Adenylate isopentenyltransferase 7, mitochondrial (IPT7) of Arabidopsis thaliana (Mouse-ear cress).